Consider the following 121-residue polypeptide: MDKTQSRLRRARQTRIKIAELQVARLAVHRTNTHIYAQVFSPCGTKVLASASTLEAEVRAQLADKSGKGGNVAAATLIGKRIAEKAKAAGIESVAFDRSGFRYHGRVKALADAAREAGLKF.

This sequence belongs to the universal ribosomal protein uL18 family. As to quaternary structure, part of the 50S ribosomal subunit; part of the 5S rRNA/L5/L18/L25 subcomplex. Contacts the 5S and 23S rRNAs.

In terms of biological role, this is one of the proteins that bind and probably mediate the attachment of the 5S RNA into the large ribosomal subunit, where it forms part of the central protuberance. This Paraburkholderia phymatum (strain DSM 17167 / CIP 108236 / LMG 21445 / STM815) (Burkholderia phymatum) protein is Large ribosomal subunit protein uL18.